A 167-amino-acid polypeptide reads, in one-letter code: 6,7-dimethyl-8-ribityllumazine synthase (167 aa).

Residues F26, 60–62 (AFE), and 89–91 (AII) contribute to the 5-amino-6-(D-ribitylamino)uracil site. (2S)-2-hydroxy-3-oxobutyl phosphate is bound at residue 94–95 (ET). The active-site Proton donor is the H97. 5-amino-6-(D-ribitylamino)uracil is bound at residue F122. R136 is a binding site for (2S)-2-hydroxy-3-oxobutyl phosphate.

Belongs to the DMRL synthase family. In terms of assembly, forms an icosahedral capsid composed of 60 subunits, arranged as a dodecamer of pentamers.

It carries out the reaction (2S)-2-hydroxy-3-oxobutyl phosphate + 5-amino-6-(D-ribitylamino)uracil = 6,7-dimethyl-8-(1-D-ribityl)lumazine + phosphate + 2 H2O + H(+). The protein operates within cofactor biosynthesis; riboflavin biosynthesis; riboflavin from 2-hydroxy-3-oxobutyl phosphate and 5-amino-6-(D-ribitylamino)uracil: step 1/2. Its function is as follows. Catalyzes the formation of 6,7-dimethyl-8-ribityllumazine by condensation of 5-amino-6-(D-ribitylamino)uracil with 3,4-dihydroxy-2-butanone 4-phosphate. This is the penultimate step in the biosynthesis of riboflavin. The sequence is that of 6,7-dimethyl-8-ribityllumazine synthase from Ruthia magnifica subsp. Calyptogena magnifica.